The chain runs to 403 residues: Phosphopentomutase (403 aa).

The Mn(2+) site is built by D13, D298, H303, D339, H340, and H351.

This sequence belongs to the phosphopentomutase family. Mn(2+) serves as cofactor.

The protein localises to the cytoplasm. The enzyme catalyses 2-deoxy-alpha-D-ribose 1-phosphate = 2-deoxy-D-ribose 5-phosphate. It carries out the reaction alpha-D-ribose 1-phosphate = D-ribose 5-phosphate. It functions in the pathway carbohydrate degradation; 2-deoxy-D-ribose 1-phosphate degradation; D-glyceraldehyde 3-phosphate and acetaldehyde from 2-deoxy-alpha-D-ribose 1-phosphate: step 1/2. Its function is as follows. Isomerase that catalyzes the conversion of deoxy-ribose 1-phosphate (dRib-1-P) and ribose 1-phosphate (Rib-1-P) to deoxy-ribose 5-phosphate (dRib-5-P) and ribose 5-phosphate (Rib-5-P), respectively. The protein is Phosphopentomutase of Streptococcus thermophilus (strain ATCC BAA-491 / LMD-9).